A 123-amino-acid chain; its full sequence is Large ribosomal subunit protein bL19 (123 aa).

It belongs to the bacterial ribosomal protein bL19 family.

In terms of biological role, this protein is located at the 30S-50S ribosomal subunit interface and may play a role in the structure and function of the aminoacyl-tRNA binding site. This Laribacter hongkongensis (strain HLHK9) protein is Large ribosomal subunit protein bL19.